Reading from the N-terminus, the 714-residue chain is Polyribonucleotide nucleotidyltransferase (714 aa).

Mg(2+) contacts are provided by D488 and D494. The KH domain occupies 555-614 (PRIEVMNIPTDKIRDVIGSGGKVIREIVEKTGAKINIEDDGTVKIASSNGKEIEAAKKWI). One can recognise an S1 motif domain in the interval 624–692 (GEIYEGTVVK…ERGKVRLSMK (69 aa)).

Belongs to the polyribonucleotide nucleotidyltransferase family. Requires Mg(2+) as cofactor.

It is found in the cytoplasm. The enzyme catalyses RNA(n+1) + phosphate = RNA(n) + a ribonucleoside 5'-diphosphate. Involved in mRNA degradation. Catalyzes the phosphorolysis of single-stranded polyribonucleotides processively in the 3'- to 5'-direction. In Brucella suis biovar 1 (strain 1330), this protein is Polyribonucleotide nucleotidyltransferase.